The primary structure comprises 320 residues: ATP-dependent 6-phosphofructokinase (320 aa).

G11 is a binding site for ATP. 21-25 provides a ligand contact to ADP; that stretch reads RAVTK. Residues 72–73 and 102–105 contribute to the ATP site; these read RF and GDGS. D103 lines the Mg(2+) pocket. Residue 125-127 participates in substrate binding; it reads TID. D127 functions as the Proton acceptor in the catalytic mechanism. R154 contributes to the ADP binding site. Substrate-binding positions include R162 and 169 to 171; that span reads MGR. ADP contacts are provided by residues 185 to 187 and 213 to 215; these read GAD and KDH. Substrate-binding positions include E222, R243, and 249-252; that span reads HMQR.

Belongs to the phosphofructokinase type A (PFKA) family. ATP-dependent PFK group I subfamily. Prokaryotic clade 'B1' sub-subfamily. In terms of assembly, homotetramer. It depends on Mg(2+) as a cofactor.

It localises to the cytoplasm. The enzyme catalyses beta-D-fructose 6-phosphate + ATP = beta-D-fructose 1,6-bisphosphate + ADP + H(+). It participates in carbohydrate degradation; glycolysis; D-glyceraldehyde 3-phosphate and glycerone phosphate from D-glucose: step 3/4. Allosterically activated by ADP and other diphosphonucleosides, and allosterically inhibited by phosphoenolpyruvate. Functionally, catalyzes the phosphorylation of D-fructose 6-phosphate to fructose 1,6-bisphosphate by ATP, the first committing step of glycolysis. The protein is ATP-dependent 6-phosphofructokinase of Lactobacillus helveticus (strain DPC 4571).